The chain runs to 272 residues: Putative protein-disulfide oxidoreductase RP025 (272 aa).

An N-terminal signal peptide occupies residues 1–21 (MRNIFIVLIFLFLSNCSEVKA). The Thioredoxin domain occupies 74–263 (DSREQKKPEI…ISKAVDKALD (190 aa)). A disulfide bridge connects residues Cys116 and Cys119.

The protein belongs to the thioredoxin family. DsbA subfamily.

Its subcellular location is the periplasm. In terms of biological role, may be required for disulfide bond formation in some proteins. This is Putative protein-disulfide oxidoreductase RP025 from Rickettsia prowazekii (strain Madrid E).